We begin with the raw amino-acid sequence, 305 residues long: Ribonuclease BN (305 aa).

7 residues coordinate Zn(2+): His-64, His-66, Asp-68, His-69, His-141, Asp-212, and His-270. Asp-68 (proton acceptor) is an active-site residue.

Belongs to the RNase Z family. RNase BN subfamily. As to quaternary structure, homodimer. It depends on Zn(2+) as a cofactor.

Its function is as follows. Zinc phosphodiesterase, which has both exoribonuclease and endoribonuclease activities. In Salmonella gallinarum (strain 287/91 / NCTC 13346), this protein is Ribonuclease BN.